Here is a 113-residue protein sequence, read N- to C-terminus: uncharacterized protein (113 aa).

An N-terminal signal peptide occupies residues Met1–Ala38.

This is an uncharacterized protein from Haemophilus influenzae (strain ATCC 51907 / DSM 11121 / KW20 / Rd).